We begin with the raw amino-acid sequence, 518 residues long: Probable glycosyltransferase At5g03795 (518 aa).

Residues 1 to 25 (MGDEDVDGKCKNMSACSSTTSYSTK) lie on the Cytoplasmic side of the membrane. A helical; Signal-anchor for type II membrane protein membrane pass occupies residues 26–46 (LFLFMVPLVVISGFVFVNIGP). Residues 47 to 518 (KDSTSLLTSL…RRLNVKIREV (472 aa)) lie on the Lumenal side of the membrane. 5 N-linked (GlcNAc...) asparagine glycosylation sites follow: Asn104, Asn113, Asn120, Asn282, and Asn320.

This sequence belongs to the glycosyltransferase 47 family.

The protein localises to the golgi apparatus membrane. Its function is as follows. May be involved in cell wall biosynthesis. This chain is Probable glycosyltransferase At5g03795, found in Arabidopsis thaliana (Mouse-ear cress).